Reading from the N-terminus, the 191-residue chain is Protein GrpE (191 aa).

Basic and acidic residues predominate over residues 1–13 (MSEKKNKKEKLAE). The segment at 1–40 (MSEKKNKKEKLAEEIEQEELNSLDESVETVEEEATEETLT) is disordered. A compositionally biased stretch (acidic residues) spans 14–40 (EIEQEELNSLDESVETVEEEATEETLT).

Belongs to the GrpE family. As to quaternary structure, homodimer.

The protein localises to the cytoplasm. Functionally, participates actively in the response to hyperosmotic and heat shock by preventing the aggregation of stress-denatured proteins, in association with DnaK and GrpE. It is the nucleotide exchange factor for DnaK and may function as a thermosensor. Unfolded proteins bind initially to DnaJ; upon interaction with the DnaJ-bound protein, DnaK hydrolyzes its bound ATP, resulting in the formation of a stable complex. GrpE releases ADP from DnaK; ATP binding to DnaK triggers the release of the substrate protein, thus completing the reaction cycle. Several rounds of ATP-dependent interactions between DnaJ, DnaK and GrpE are required for fully efficient folding. This Listeria innocua serovar 6a (strain ATCC BAA-680 / CLIP 11262) protein is Protein GrpE.